Reading from the N-terminus, the 280-residue chain is MEREISALYEPKRNNEIRIFESSDEMSTDLAEYISQVSEISVKERGYFAIALSGGPLVSFLGKLCEAPYNKTLDWSKWYIFWSDERAVAKNHAESNYRITKEGFLSKVPILNGHVYSINDNATVEDAATDYEFVIRQLVKVRTIGVSESNDCPKFDLILLSMGSDGHVASLFPNHPSLELKDDWITYITDSPQPPPERITFTLPVINSASNIAIVTTGDDKSEAVHLAISDNADGPEAPSSLPARMVQPTDGKLVWFLDKSAASSLDAENDDAFEQHREY.

The protein belongs to the glucosamine/galactosamine-6-phosphate isomerase family. 6-phosphogluconolactonase subfamily.

It carries out the reaction 6-phospho-D-glucono-1,5-lactone + H2O = 6-phospho-D-gluconate + H(+). Its pathway is carbohydrate degradation; pentose phosphate pathway; D-ribulose 5-phosphate from D-glucose 6-phosphate (oxidative stage): step 2/3. Functionally, hydrolysis of 6-phosphogluconolactone to 6-phosphogluconate. In Oryza sativa subsp. indica (Rice), this protein is Probable 6-phosphogluconolactonase 2.